We begin with the raw amino-acid sequence, 127 residues long: Major sperm protein 55/57 (127 aa).

Alanine 2 is modified (N-acetylalanine). One can recognise an MSP domain in the interval 9 to 126 (DIQTQPGTKI…RRKNLPIEYN (118 aa)).

Sperm.

The protein localises to the cell projection. It localises to the pseudopodium. The protein resides in the cytoplasm. Its subcellular location is the cytoskeleton. Functionally, central component in molecular interactions underlying sperm crawling. Forms an extensive filament system that extends from sperm villipoda, along the leading edge of the pseudopod. This chain is Major sperm protein 55/57 (msp-55), found in Caenorhabditis elegans.